We begin with the raw amino-acid sequence, 896 residues long: Desmocollin-3 (896 aa).

The N-terminal stretch at 1-26 is a signal peptide; the sequence is MAAPGSGAPCAELCRQLLLTLVVFSF. Residues 27 to 134 constitute a propeptide that is removed on maturation; sequence ACEACKKEIF…KETVLRRSKR (108 aa). Cadherin domains are found at residues 135–242, 243–354, 355–471, 472–579, and 580–690; these read RWAP…HPIF, TEAV…LPTF, RQNA…GPEC, SPEV…EILQ, and DYLV…ILGK. Topologically, residues 135-690 are extracellular; sequence RWAPIPCSMQ…RRSADVILGK (556 aa). The N-linked (GlcNAc...) asparagine glycan is linked to N165. N-linked (GlcNAc...) asparagine glycosylation is found at N391, N546, and N629. Residues 691 to 711 form a helical membrane-spanning segment; sequence WAILAILLGIALLFSILLTLV. Residues 712–896 lie on the Cytoplasmic side of the membrane; the sequence is CGIVSARNKK…AALAKTCTKR (185 aa).

In terms of assembly, may form homodimers. Interacts with DSG1; there is evidence to suggest that the interaction promotes cell-cell adhesion of keratinocytes. As to expression, expressed in stratified epithelia only, such as the epidermis, tongue, esophagus and rumen (at protein level).

The protein resides in the cell membrane. It localises to the cell junction. It is found in the desmosome. The protein localises to the cytoplasm. Its function is as follows. A component of desmosome cell-cell junctions which are required for positive regulation of cellular adhesion. Required for cell-cell adhesion in the epidermis, as a result required for the maintenance of the dermal cohesion and the dermal barrier function. Required for cell-cell adhesion of epithelial cell layers surrounding the telogen hair club, as a result plays an important role in telogen hair shaft anchorage. Essential for successful completion of embryo compaction and embryo development. This Bos taurus (Bovine) protein is Desmocollin-3 (DSC3).